We begin with the raw amino-acid sequence, 262 residues long: Tryptophan synthase alpha chain (262 aa).

Active-site proton acceptor residues include Glu51 and Asp62.

This sequence belongs to the TrpA family. In terms of assembly, tetramer of two alpha and two beta chains.

The catalysed reaction is (1S,2R)-1-C-(indol-3-yl)glycerol 3-phosphate + L-serine = D-glyceraldehyde 3-phosphate + L-tryptophan + H2O. Its pathway is amino-acid biosynthesis; L-tryptophan biosynthesis; L-tryptophan from chorismate: step 5/5. Its function is as follows. The alpha subunit is responsible for the aldol cleavage of indoleglycerol phosphate to indole and glyceraldehyde 3-phosphate. In Oceanobacillus iheyensis (strain DSM 14371 / CIP 107618 / JCM 11309 / KCTC 3954 / HTE831), this protein is Tryptophan synthase alpha chain.